Here is a 1598-residue protein sequence, read N- to C-terminus: Pentafunctional AROM polypeptide (1598 aa).

The 3-dehydroquinate synthase stretch occupies residues 1–384; it reads MGVPTKISIL…YEPRACTVSN (384 aa). NAD(+) is bound by residues 44–46, 81–84, 114–116, and Asp-119; these read DTN, ESSK, and GGV. Arg-130 is a binding site for 7-phospho-2-dehydro-3-deoxy-D-arabino-heptonate. 139–140 provides a ligand contact to NAD(+); it reads TT. The 7-phospho-2-dehydro-3-deoxy-D-arabino-heptonate site is built by Asp-146 and Lys-152. Lys-161 lines the NAD(+) pocket. Residue Asn-162 coordinates 7-phospho-2-dehydro-3-deoxy-D-arabino-heptonate. Residues 179–182 and Asn-190 each bind NAD(+); that span reads FLNT. Residue Glu-194 coordinates Zn(2+). Residues 194–197 and Lys-250 each bind 7-phospho-2-dehydro-3-deoxy-D-arabino-heptonate; that span reads EVIK. The active-site Proton acceptor; for 3-dehydroquinate synthase activity is Glu-260. 7-phospho-2-dehydro-3-deoxy-D-arabino-heptonate is bound by residues 264 to 268 and His-271; that span reads RNLLN. Residue His-271 coordinates Zn(2+). His-275 acts as the Proton acceptor; for 3-dehydroquinate synthase activity in catalysis. Positions 287 and 356 each coordinate 7-phospho-2-dehydro-3-deoxy-D-arabino-heptonate. His-287 contacts Zn(2+). The segment at 397-842 is EPSP synthase; that stretch reads VYPGFPKSLN…WDTLAQTFKV (446 aa). Catalysis depends on Cys-824, which acts as the For EPSP synthase activity. The tract at residues 867-1059 is shikimate kinase; it reads AASIFIIGMR…RRKENTFFVS (193 aa). 874–881 contributes to the ATP binding site; it reads GMRGAGKT. The tract at residues 1060–1280 is 3-dehydroquinase; sequence LTFPDLTPAS…AAPGQLSARE (221 aa). Catalysis depends on His-1183, which acts as the Proton acceptor; for 3-dehydroquinate dehydratase activity. Lys-1211 acts as the Schiff-base intermediate with substrate; for 3-dehydroquinate dehydratase activity in catalysis. The shikimate dehydrogenase stretch occupies residues 1293–1598; sequence AKKFAVIGKP…GVSSSDDIIS (306 aa).

In the N-terminal section; belongs to the sugar phosphate cyclases superfamily. Dehydroquinate synthase family. It in the 2nd section; belongs to the EPSP synthase family. The protein in the 3rd section; belongs to the shikimate kinase family. This sequence in the 4th section; belongs to the type-I 3-dehydroquinase family. In the C-terminal section; belongs to the shikimate dehydrogenase family. Homodimer. It depends on Zn(2+) as a cofactor.

The protein resides in the cytoplasm. It catalyses the reaction 7-phospho-2-dehydro-3-deoxy-D-arabino-heptonate = 3-dehydroquinate + phosphate. The catalysed reaction is 3-dehydroquinate = 3-dehydroshikimate + H2O. The enzyme catalyses shikimate + NADP(+) = 3-dehydroshikimate + NADPH + H(+). It carries out the reaction shikimate + ATP = 3-phosphoshikimate + ADP + H(+). It catalyses the reaction 3-phosphoshikimate + phosphoenolpyruvate = 5-O-(1-carboxyvinyl)-3-phosphoshikimate + phosphate. The protein operates within metabolic intermediate biosynthesis; chorismate biosynthesis; chorismate from D-erythrose 4-phosphate and phosphoenolpyruvate: step 2/7. Its pathway is metabolic intermediate biosynthesis; chorismate biosynthesis; chorismate from D-erythrose 4-phosphate and phosphoenolpyruvate: step 3/7. It functions in the pathway metabolic intermediate biosynthesis; chorismate biosynthesis; chorismate from D-erythrose 4-phosphate and phosphoenolpyruvate: step 4/7. It participates in metabolic intermediate biosynthesis; chorismate biosynthesis; chorismate from D-erythrose 4-phosphate and phosphoenolpyruvate: step 5/7. The protein operates within metabolic intermediate biosynthesis; chorismate biosynthesis; chorismate from D-erythrose 4-phosphate and phosphoenolpyruvate: step 6/7. The AROM polypeptide catalyzes 5 consecutive enzymatic reactions in prechorismate polyaromatic amino acid biosynthesis. In Paracoccidioides lutzii (strain ATCC MYA-826 / Pb01) (Paracoccidioides brasiliensis), this protein is Pentafunctional AROM polypeptide.